A 184-amino-acid polypeptide reads, in one-letter code: Peptidyl-tRNA hydrolase (184 aa).

Tyr13 provides a ligand contact to tRNA. His18 acts as the Proton acceptor in catalysis. Residues Phe59, Asn61, and Asn105 each coordinate tRNA.

Belongs to the PTH family. In terms of assembly, monomer.

It localises to the cytoplasm. The catalysed reaction is an N-acyl-L-alpha-aminoacyl-tRNA + H2O = an N-acyl-L-amino acid + a tRNA + H(+). Functionally, hydrolyzes ribosome-free peptidyl-tRNAs (with 1 or more amino acids incorporated), which drop off the ribosome during protein synthesis, or as a result of ribosome stalling. In terms of biological role, catalyzes the release of premature peptidyl moieties from peptidyl-tRNA molecules trapped in stalled 50S ribosomal subunits, and thus maintains levels of free tRNAs and 50S ribosomes. This chain is Peptidyl-tRNA hydrolase, found in Sulfurimonas denitrificans (strain ATCC 33889 / DSM 1251) (Thiomicrospira denitrificans (strain ATCC 33889 / DSM 1251)).